Reading from the N-terminus, the 502-residue chain is DnaJ homolog subfamily C member 3 homolog (502 aa).

Positions 1–25 (MIVNKKYFLLICIIILISINCLVLA) are cleaved as a signal peptide. TPR repeat units follow at residues 29-62 (IENF…IGSD), 69-102 (VSLL…NPDN), 103-136 (IHAR…RPDN), 184-217 (KEVR…EPSS), 218-251 (VAAL…DPDN), 264-297 (FEKS…EPNS), 302-335 (TPLY…DELN), and 336-369 (ADAL…KPND). An N-linked (GlcNAc...) asparagine glycan is attached at Asn-51. Cys-309 and Cys-325 are oxidised to a cystine. Residues 390-457 (DYYKILGIQK…EKRKRYDMGE (68 aa)) form the J domain.

It localises to the secreted. The protein localises to the endoplasmic reticulum lumen. In terms of biological role, may be involved in the unfolded protein response (UPR) during ER stress. This chain is DnaJ homolog subfamily C member 3 homolog (dnajc3), found in Dictyostelium discoideum (Social amoeba).